The sequence spans 450 residues: Large terminase protein homolog UL15b (450 aa).

Belongs to the herpesviridae large terminase family.

The protein is Large terminase protein homolog UL15b (UL15b) of Psittacid herpesvirus 1 (isolate Amazon parrot/-/97-0001/1997) (PsHV-1).